Consider the following 334-residue polypeptide: Holliday junction branch migration complex subunit RuvB (334 aa).

A large ATPase domain (RuvB-L) region spans residues 4 to 186 (ADRLIAPENP…FGITQRLEYY (183 aa)). ATP-binding positions include Ile-25, Arg-26, Gly-67, Lys-70, Thr-71, Thr-72, 133-135 (EDY), Arg-176, Tyr-186, and Arg-223. Residue Thr-71 coordinates Mg(2+). Residues 187–257 (KIPDLQNIVQ…TADKALNMLD (71 aa)) form a small ATPAse domain (RuvB-S) region. The tract at residues 260–334 (SKGFDYMDRK…RAYLHFGIEK (75 aa)) is head domain (RuvB-H). The DNA site is built by Arg-315 and Arg-320.

This sequence belongs to the RuvB family. In terms of assembly, homohexamer. Forms an RuvA(8)-RuvB(12)-Holliday junction (HJ) complex. HJ DNA is sandwiched between 2 RuvA tetramers; dsDNA enters through RuvA and exits via RuvB. An RuvB hexamer assembles on each DNA strand where it exits the tetramer. Each RuvB hexamer is contacted by two RuvA subunits (via domain III) on 2 adjacent RuvB subunits; this complex drives branch migration. In the full resolvosome a probable DNA-RuvA(4)-RuvB(12)-RuvC(2) complex forms which resolves the HJ.

It is found in the cytoplasm. It catalyses the reaction ATP + H2O = ADP + phosphate + H(+). The RuvA-RuvB-RuvC complex processes Holliday junction (HJ) DNA during genetic recombination and DNA repair, while the RuvA-RuvB complex plays an important role in the rescue of blocked DNA replication forks via replication fork reversal (RFR). RuvA specifically binds to HJ cruciform DNA, conferring on it an open structure. The RuvB hexamer acts as an ATP-dependent pump, pulling dsDNA into and through the RuvAB complex. RuvB forms 2 homohexamers on either side of HJ DNA bound by 1 or 2 RuvA tetramers; 4 subunits per hexamer contact DNA at a time. Coordinated motions by a converter formed by DNA-disengaged RuvB subunits stimulates ATP hydrolysis and nucleotide exchange. Immobilization of the converter enables RuvB to convert the ATP-contained energy into a lever motion, pulling 2 nucleotides of DNA out of the RuvA tetramer per ATP hydrolyzed, thus driving DNA branch migration. The RuvB motors rotate together with the DNA substrate, which together with the progressing nucleotide cycle form the mechanistic basis for DNA recombination by continuous HJ branch migration. Branch migration allows RuvC to scan DNA until it finds its consensus sequence, where it cleaves and resolves cruciform DNA. This is Holliday junction branch migration complex subunit RuvB from Vibrio vulnificus (strain YJ016).